A 184-amino-acid chain; its full sequence is Prolyl-tRNA synthetase associated domain-containing protein 1 (184 aa).

The protein belongs to the PRORSD1 family.

The protein is Prolyl-tRNA synthetase associated domain-containing protein 1 (Prorsd1) of Danio rerio (Zebrafish).